Here is a 369-residue protein sequence, read N- to C-terminus: Ubiquitin-conjugating enzyme E2 Q2 (369 aa).

Positions 117-143 (DQPLPTGQNGTTEEVTSEEEEEEEMAE) are disordered. Positions 131-143 (VTSEEEEEEEMAE) are enriched in acidic residues. Residues 198-362 (QASDRLMKEL…VQIHEKNGWY (165 aa)) form the UBC core domain. The active-site Glycyl thioester intermediate is C298.

Belongs to the ubiquitin-conjugating enzyme family. Auto-ubiquitinated in vitro. As to expression, detected at embryo implantation sites in the luminal epithelium of pregnant endometrium. Detected at low levels in ovary and liver.

It is found in the cytoplasm. The catalysed reaction is S-ubiquitinyl-[E1 ubiquitin-activating enzyme]-L-cysteine + [E2 ubiquitin-conjugating enzyme]-L-cysteine = [E1 ubiquitin-activating enzyme]-L-cysteine + S-ubiquitinyl-[E2 ubiquitin-conjugating enzyme]-L-cysteine.. Its pathway is protein modification; protein ubiquitination. Functionally, accepts ubiquitin from the E1 complex and catalyzes its covalent attachment to other proteins. In vitro catalyzes 'Lys-48'-linked polyubiquitination. The sequence is that of Ubiquitin-conjugating enzyme E2 Q2 (UBE2Q2) from Oryctolagus cuniculus (Rabbit).